We begin with the raw amino-acid sequence, 151 residues long: Transcriptional regulator MraZ (151 aa).

SpoVT-AbrB domains are found at residues Ala5–Glu51 and Ala81–Gln124.

Belongs to the MraZ family. As to quaternary structure, forms oligomers.

It localises to the cytoplasm. It is found in the nucleoid. This is Transcriptional regulator MraZ from Neisseria gonorrhoeae (strain ATCC 700825 / FA 1090).